A 775-amino-acid polypeptide reads, in one-letter code: Phenylalanine--tRNA ligase beta subunit (775 aa).

Residues 39–147 enclose the tRNA-binding domain; sequence GIDLDGVVFG…EDFKPGTDAN (109 aa). The B5 domain occupies 394–470; that stretch reads YKPKKVFLPQ…RVKGYEHYTS (77 aa). Positions 448, 454, 457, and 458 each coordinate Mg(2+). Positions 681-774 constitute an FDX-ACB domain; that stretch reads AKFPPVVRDI…LKEKYGVELR (94 aa).

It belongs to the phenylalanyl-tRNA synthetase beta subunit family. Type 1 subfamily. As to quaternary structure, tetramer of two alpha and two beta subunits. Mg(2+) serves as cofactor.

The protein localises to the cytoplasm. The catalysed reaction is tRNA(Phe) + L-phenylalanine + ATP = L-phenylalanyl-tRNA(Phe) + AMP + diphosphate + H(+). This Aquifex aeolicus (strain VF5) protein is Phenylalanine--tRNA ligase beta subunit (pheT).